A 131-amino-acid polypeptide reads, in one-letter code: Ribosome-binding factor A (131 aa).

The protein belongs to the RbfA family. As to quaternary structure, monomer. Binds 30S ribosomal subunits, but not 50S ribosomal subunits or 70S ribosomes.

Its subcellular location is the cytoplasm. Functionally, one of several proteins that assist in the late maturation steps of the functional core of the 30S ribosomal subunit. Associates with free 30S ribosomal subunits (but not with 30S subunits that are part of 70S ribosomes or polysomes). Required for efficient processing of 16S rRNA. May interact with the 5'-terminal helix region of 16S rRNA. In Christiangramia forsetii (strain DSM 17595 / CGMCC 1.15422 / KT0803) (Gramella forsetii), this protein is Ribosome-binding factor A.